A 574-amino-acid polypeptide reads, in one-letter code: Aspartate--tRNA ligase (574 aa).

Glu172 is an L-aspartate binding site. Residues 196–199 form an aspartate region; that stretch reads QIFK. Arg218 lines the L-aspartate pocket. Residues 218-220 and Gln227 each bind ATP; that span reads RDE. An L-aspartate-binding site is contributed by His453. Glu487 provides a ligand contact to ATP. Arg494 provides a ligand contact to L-aspartate. 539 to 542 is a binding site for ATP; it reads GLDR.

It belongs to the class-II aminoacyl-tRNA synthetase family. Type 1 subfamily. As to quaternary structure, homodimer.

It is found in the cytoplasm. The enzyme catalyses tRNA(Asp) + L-aspartate + ATP = L-aspartyl-tRNA(Asp) + AMP + diphosphate. Catalyzes the attachment of L-aspartate to tRNA(Asp) in a two-step reaction: L-aspartate is first activated by ATP to form Asp-AMP and then transferred to the acceptor end of tRNA(Asp). The protein is Aspartate--tRNA ligase of Blochmanniella pennsylvanica (strain BPEN).